The primary structure comprises 335 residues: MAETATRSDSGMFWKATTYKEQYWDGYLAARPKYSSDFYERIVDYYKAHNPSPPTPTVAHDVGTGPGQVASELCKYFDKVIASDPNSTHLAVASARNEKSGLNHKITWTEVSAEDLNSHYPAGSASFLAAAECLPLLDVPRALNTFAHLLHPNGTLAAWFYGRPVFSEPTVAAKCQPILNDIIDLTFEKVIKGAPPAHKTTWKRSTDTLYSFLDNVAFPTETWRDVYRFKWNPHLPLSVVGPNACDYPIEPSSCIDPEREKVVEAKDPHFWEEVWDIFEVRRFVECLLPNIEELKSKGVYDHVEVKYKELEEAMGGANAKKEITWPVVLILATRV.

Belongs to the methyltransferase superfamily.

Its pathway is pigment biosynthesis. The protein operates within secondary metabolite biosynthesis. Methyltransferase; part of the gene cluster that mediates the biosynthesis of pleosporalin A, ascomycone A, as well as a third cryptic naphthoquinone derived pigment, all responsible for the coloration of conidia. Essential for the production of pleosporalin A, but not the 2 other final products. The pathway begins with the biosynthesis of the cyclized heptaketide 3-acetonyl-1,6,8-trihydroxy-2-naphthaldehyde by the NR-PKS pgmA. The C-6 hydroxyl group is further methylated by the O-methyltransferase pgmB to yield fusarubinaldehyde which is in turn oxidized by the cytochrome P450 monooxygenase pgmC at C-9. The C-1 hydroxyl group is then methylated spontaneously. Although pgmE, pgmD and pgmH are essential for the production of pleosporalin A, it is not the case for the 2 other final products and it remains difficult to assign a specific function to each enzyme. PgmF and pgmG seem not to be involved in pigment biosynthesis although they were regulated by the cluster-specific transcription factor pgmR. In Aspergillus terreus (strain NIH 2624 / FGSC A1156), this protein is Methyltransferase pgmE.